A 348-amino-acid polypeptide reads, in one-letter code: Inactive rhomboid-related protein 2 (348 aa).

The 36-residue stretch at 14 to 49 (IEASSWIRIFRAFDTDHDGLIQCEEMQKTIRDSTYS) folds into the EF-hand domain. Residues Asp27, Asp29, Asp31, and Glu38 each contribute to the Ca(2+) site. 7 helical membrane passes run 121–141 (PPIF…YYVV), 177–197 (LINV…AIGV), 207–227 (IYIL…ALDP), 229–249 (VFLC…ITTI), 263–283 (LPIL…QRFF), 290–310 (VSMY…FILF), and 323–343 (FWVS…LIAA).

The protein belongs to the peptidase S54 family.

It is found in the membrane. Its function is as follows. Probable inactive serine protease. The protein is Inactive rhomboid-related protein 2 of Caenorhabditis elegans.